Reading from the N-terminus, the 219-residue chain is Small ribosomal subunit protein uS5 (219 aa).

Positions 1-32 are disordered; it reads MSHPQSRPGGRDGRPRRRREPREEAPWVPKTA. Residues 68 to 131 enclose the S5 DRBM domain; sequence LKTEVVDVGI…NQALLNVGPI (64 aa).

This sequence belongs to the universal ribosomal protein uS5 family. Part of the 30S ribosomal subunit. Contacts protein S4.

In terms of biological role, with S4 and S12 plays an important role in translational accuracy. The chain is Small ribosomal subunit protein uS5 (rps5) from Cenarchaeum symbiosum (strain A).